The sequence spans 475 residues: BTB/POZ domain-containing protein 10 (475 aa).

The segment at Met1–Cys143 is disordered. Positions Leu22–Lys31 are enriched in basic residues. Positions Gly57–Glu80 are enriched in basic and acidic residues. Residues Ser81–Thr94 are compositionally biased toward polar residues. Residues His97–Ser107 are compositionally biased toward basic and acidic residues. Over residues Ser108–Ser142 the composition is skewed to low complexity. Positions Ala146 to Leu475 are interaction with AKT family members. The BTB domain occupies Glu167–Asp241. A disordered region spans residues Pro456 to Leu475.

As to quaternary structure, interacts (via C-terminal 330-amino-acid region) with AKT1; AKT2 and AKT3. Interacts with PPP2CA and PPP1CA.

It is found in the nucleus. The protein localises to the cytoplasm. Its function is as follows. Plays a major role as an activator of AKT family members by inhibiting PPP2CA-mediated dephosphorylation, thereby keeping AKTs activated. Plays a role in preventing motor neuronal death and in accelerating the growth of pancreatic beta cells. The chain is BTB/POZ domain-containing protein 10 (BTBD10) from Pongo abelii (Sumatran orangutan).